A 159-amino-acid chain; its full sequence is Probable epoxidase scpX (159 aa).

The N-terminal stretch at 1–25 (MATLIRLLRLLPVASSSAVLMFALD) is a signal peptide. 2 consecutive transmembrane segments (helical) span residues 59–79 (WVLI…LFIS) and 96–116 (LLFS…IAAI). Asn124 and Asn136 each carry an N-linked (GlcNAc...) asparagine glycan. A helical transmembrane segment spans residues 139 to 159 (RALLTDLPAWLCFIAAALKAL).

This sequence belongs to the epoxidase xenD family.

The protein localises to the membrane. The protein operates within mycotoxin biosynthesis. In terms of biological role, probable epoxidase; part of the gene scp cluster that mediates the biosynthesis of a hirsutellone-like compound that has still to be identified. This chain is Probable epoxidase scpX, found in Mollisia scopiformis (Conifer needle endophyte fungus).